Here is a 187-residue protein sequence, read N- to C-terminus: Transcriptional repressor NrdR (187 aa).

A zinc finger spans residues 3-34 (CPFCRHPDSRVVDSRTTDDGTSIRRRRQCPDC). Positions 46–136 (LMVVKRSGVT…VYRAFDSLED (91 aa)) constitute an ATP-cone domain. The disordered stretch occupies residues 146 to 187 (EEQRERPAVDDEDHEDAGAERQGTDRGSGGTVEVPVPATVAD).

The protein belongs to the NrdR family. Zn(2+) serves as cofactor.

Negatively regulates transcription of bacterial ribonucleotide reductase nrd genes and operons by binding to NrdR-boxes. The chain is Transcriptional repressor NrdR from Streptomyces avermitilis (strain ATCC 31267 / DSM 46492 / JCM 5070 / NBRC 14893 / NCIMB 12804 / NRRL 8165 / MA-4680).